Reading from the N-terminus, the 337-residue chain is Ferredoxin--NADP reductase (337 aa).

FAD contacts are provided by D35, Q43, Y48, A88, F122, D289, and T330.

This sequence belongs to the ferredoxin--NADP reductase type 2 family. In terms of assembly, homodimer. The cofactor is FAD.

It carries out the reaction 2 reduced [2Fe-2S]-[ferredoxin] + NADP(+) + H(+) = 2 oxidized [2Fe-2S]-[ferredoxin] + NADPH. The polypeptide is Ferredoxin--NADP reductase (Ehrlichia ruminantium (strain Gardel)).